Consider the following 161-residue polypeptide: UPF0262 protein SPOA0072 (161 aa).

Residues 1–21 (MTMSRISHIELDDSNLPPPTP) are disordered.

This sequence belongs to the UPF0262 family.

The chain is UPF0262 protein SPOA0072 from Ruegeria pomeroyi (strain ATCC 700808 / DSM 15171 / DSS-3) (Silicibacter pomeroyi).